We begin with the raw amino-acid sequence, 514 residues long: Membrane-bound lytic murein transglycosylase F (514 aa).

A signal peptide spans methionine 1 to glycine 30. The interval lysine 31–glycine 269 is non-LT domain. The segment at aspartate 270–lysine 514 is LT domain. The active site involves glutamate 314.

This sequence in the N-terminal section; belongs to the bacterial solute-binding protein 3 family. It in the C-terminal section; belongs to the transglycosylase Slt family.

Its subcellular location is the cell outer membrane. The catalysed reaction is Exolytic cleavage of the (1-&gt;4)-beta-glycosidic linkage between N-acetylmuramic acid (MurNAc) and N-acetylglucosamine (GlcNAc) residues in peptidoglycan, from either the reducing or the non-reducing ends of the peptidoglycan chains, with concomitant formation of a 1,6-anhydrobond in the MurNAc residue.. In terms of biological role, murein-degrading enzyme that degrades murein glycan strands and insoluble, high-molecular weight murein sacculi, with the concomitant formation of a 1,6-anhydromuramoyl product. Lytic transglycosylases (LTs) play an integral role in the metabolism of the peptidoglycan (PG) sacculus. Their lytic action creates space within the PG sacculus to allow for its expansion as well as for the insertion of various structures such as secretion systems and flagella. This is Membrane-bound lytic murein transglycosylase F from Salmonella arizonae (strain ATCC BAA-731 / CDC346-86 / RSK2980).